Here is a 429-residue protein sequence, read N- to C-terminus: Glutamate-1-semialdehyde 2,1-aminomutase (429 aa).

N6-(pyridoxal phosphate)lysine is present on lysine 268.

Belongs to the class-III pyridoxal-phosphate-dependent aminotransferase family. HemL subfamily. As to quaternary structure, homodimer. It depends on pyridoxal 5'-phosphate as a cofactor.

The protein localises to the cytoplasm. The enzyme catalyses (S)-4-amino-5-oxopentanoate = 5-aminolevulinate. The protein operates within porphyrin-containing compound metabolism; protoporphyrin-IX biosynthesis; 5-aminolevulinate from L-glutamyl-tRNA(Glu): step 2/2. The sequence is that of Glutamate-1-semialdehyde 2,1-aminomutase from Serratia proteamaculans (strain 568).